A 384-amino-acid chain; its full sequence is Carbamoyl phosphate synthase small chain (384 aa).

The CPSase stretch occupies residues 1-192; that stretch reads MIKKIPAILV…LADRNREKIY (192 aa). The L-glutamine site is built by Ser51, Gly244, and Gly246. The Glutamine amidotransferase type-1 domain occupies 196–382; the sequence is KVIVIDFGVK…IEIMKQFRKE (187 aa). Residue Cys272 is the Nucleophile of the active site. L-glutamine-binding residues include Met273, Gln276, Asn312, Gly314, and Phe315. Active-site residues include His355 and Glu357.

The protein belongs to the CarA family. Composed of two chains; the small (or glutamine) chain promotes the hydrolysis of glutamine to ammonia, which is used by the large (or ammonia) chain to synthesize carbamoyl phosphate. Tetramer of heterodimers (alpha,beta)4.

The protein localises to the plastid. The protein resides in the chloroplast. It catalyses the reaction hydrogencarbonate + L-glutamine + 2 ATP + H2O = carbamoyl phosphate + L-glutamate + 2 ADP + phosphate + 2 H(+). The catalysed reaction is L-glutamine + H2O = L-glutamate + NH4(+). The protein operates within amino-acid biosynthesis; L-arginine biosynthesis; carbamoyl phosphate from bicarbonate: step 1/1. Its pathway is pyrimidine metabolism; UMP biosynthesis via de novo pathway; (S)-dihydroorotate from bicarbonate: step 1/3. Small subunit of the glutamine-dependent carbamoyl phosphate synthetase (CPSase). CPSase catalyzes the formation of carbamoyl phosphate from the ammonia moiety of glutamine, carbonate, and phosphate donated by ATP, constituting the first step of 2 biosynthetic pathways, one leading to arginine and/or urea and the other to pyrimidine nucleotides. The small subunit (glutamine amidotransferase) binds and cleaves glutamine to supply the large subunit with the substrate ammonia. The protein is Carbamoyl phosphate synthase small chain of Porphyra purpurea (Red seaweed).